We begin with the raw amino-acid sequence, 133 residues long: Protein OPG104 (133 aa).

Over 1–111 (MTDEQIYAFC…RYLNQEIRYP (111 aa)) the chain is Virion surface. The helical; Signal-anchor transmembrane segment at 112-132 (IIDIKWLPIGLLALAILILAF) threads the bilayer.

The protein belongs to the orthopoxvirus OPG104 family. Part of a stable entry-fusion complex (EFC) which is at least composed of proteins OPG143, OPG147, OPG155, OPG086, OPG094, OPG107, OPG104, and OPG099. Formation of the viral membrane is necessary for the assembly of the complex.

It localises to the virion membrane. Functionally, envelope protein part of the entry-fusion complex responsible for the virus membrane fusion with host cell membrane during virus entry. Also plays a role in cell-cell fusion (syncytium formation). In Homo sapiens (Human), this protein is Protein OPG104 (OPG104).